The sequence spans 252 residues: Acetoacetate decarboxylase (252 aa).

Catalysis depends on lysine 116, which acts as the Schiff-base intermediate with acetoacetate.

Belongs to the ADC family.

It carries out the reaction acetoacetate + H(+) = acetone + CO2. Its function is as follows. Catalyzes the conversion of acetoacetate to acetone and carbon dioxide. The polypeptide is Acetoacetate decarboxylase (Paraburkholderia xenovorans (strain LB400)).